A 116-amino-acid polypeptide reads, in one-letter code: Large ribosomal subunit protein uL18 (116 aa).

The protein belongs to the universal ribosomal protein uL18 family. In terms of assembly, part of the 50S ribosomal subunit; part of the 5S rRNA/L5/L18/L25 subcomplex. Contacts the 5S and 23S rRNAs.

This is one of the proteins that bind and probably mediate the attachment of the 5S RNA into the large ribosomal subunit, where it forms part of the central protuberance. The polypeptide is Large ribosomal subunit protein uL18 (Shewanella denitrificans (strain OS217 / ATCC BAA-1090 / DSM 15013)).